The sequence spans 229 residues: Ras-related protein Rab-33B (229 aa).

Positions 43, 44, 45, 46, 47, 48, 62, and 65 each coordinate GTP. Residue Thr47 participates in Mg(2+) binding. Residues 56 to 68 (GRFPDRTEATIGV) carry the Switch 1 motif. Mg(2+) is bound by residues Thr65 and Asp88. A Switch 2 motif is present at residues 89–108 (TAGQERFRKSMVQHYYRNVH). GTP is bound by residues Gly91, Asn148, Lys149, Asp151, Ala179, and Lys180. Residues Cys227 and Cys229 are each lipidated (S-geranylgeranyl cysteine). Cys229 bears the Cysteine methyl ester mark.

Belongs to the small GTPase superfamily. Rab family. As to quaternary structure, interacts (GTP- and GDP-bound forms) with ATG16L1; the complex consists of a tetramer where two RAB33B molecules bind independently one molecule of the ATG16L1 homodimer; the interaction promotes ATG12-ATG5-ATG16L1 complex recruitment to phagophores. Interacts with ATG16L2; however interaction is approximately hundred times lower than for ATG16L1. Interacts with RIC1 (via C-terminus domain); the interaction is direct with a preference for RAB33B-GTP. Interacts with RGP1. It depends on Mg(2+) as a cofactor. In terms of processing, prenylated. In terms of tissue distribution, ubiquitous.

Its subcellular location is the golgi apparatus membrane. The protein localises to the golgi apparatus. The protein resides in the cis-Golgi network. It is found in the preautophagosomal structure membrane. It carries out the reaction GTP + H2O = GDP + phosphate + H(+). Regulated by guanine nucleotide exchange factors (GEFs) which promote the exchange of bound GDP for free GTP. Regulated by GTPase activating proteins (GAPs) such as SGSM2 which increase the GTP hydrolysis activity. Inhibited by GDP dissociation inhibitors (GDIs). Its function is as follows. The small GTPases Rab are key regulators of intracellular membrane trafficking, from the formation of transport vesicles to their fusion with membranes. Rabs cycle between an inactive GDP-bound form and an active GTP-bound form that is able to recruit to membranes different sets of downstream effectors directly responsible for vesicle formation, movement, tethering and fusion. RAB33B acts, in coordination with RAB6A, to regulate intra-Golgi retrograde trafficking. Participates in autophagosome formation by recruiting the ATG12-ATG5-ATG16L1 complex to phagophores, probably in a nucleotide-independent manner. The protein is Ras-related protein Rab-33B of Mus musculus (Mouse).